We begin with the raw amino-acid sequence, 349 residues long: Isopentenyl-diphosphate delta-isomerase (349 aa).

R9–K10 is a substrate binding site. FMN-binding positions include A65–T67, S95, and N124. S95 to H97 contacts substrate. Q154 serves as a coordination point for substrate. Residue E155 participates in Mg(2+) binding. Residues K186, S211, T216, G262–R264, and S283–R284 contribute to the FMN site.

Belongs to the IPP isomerase type 2 family. Homooctamer. Dimer of tetramers. The cofactor is FMN. It depends on NADPH as a cofactor. Mg(2+) is required as a cofactor.

It is found in the cytoplasm. The catalysed reaction is isopentenyl diphosphate = dimethylallyl diphosphate. Involved in the biosynthesis of isoprenoids. Catalyzes the 1,3-allylic rearrangement of the homoallylic substrate isopentenyl (IPP) to its allylic isomer, dimethylallyl diphosphate (DMAPP). This Staphylococcus aureus (strain MSSA476) protein is Isopentenyl-diphosphate delta-isomerase.